Reading from the N-terminus, the 589-residue chain is Probable translation initiation factor IF-2 (589 aa).

A tr-type G domain is found at 14–231; sequence LRQPIVCVLG…GLAQRFLESE (218 aa). The segment at 23-30 is G1; that stretch reads GHVDHGKT. 23-30 serves as a coordination point for GTP; sequence GHVDHGKT. The tract at residues 48-52 is G2; it reads GITQR. Residues 84–87 are G3; sequence DTPG. GTP contacts are provided by residues 84-88 and 138-141; these read DTPGH and NKID. Residues 138-141 form a G4 region; sequence NKID. The interval 206–208 is G5; the sequence is SAK.

This sequence belongs to the TRAFAC class translation factor GTPase superfamily. Classic translation factor GTPase family. IF-2 subfamily.

Its function is as follows. Function in general translation initiation by promoting the binding of the formylmethionine-tRNA to ribosomes. Seems to function along with eIF-2. In Thermoplasma volcanium (strain ATCC 51530 / DSM 4299 / JCM 9571 / NBRC 15438 / GSS1), this protein is Probable translation initiation factor IF-2.